The primary structure comprises 216 residues: Transmembrane emp24 domain-containing protein eca (216 aa).

The first 20 residues, 1–20 (MRDQFISLALILCVLHSACG), serve as a signal peptide directing secretion. Over 21-182 (LYFHISETER…FRHTSESTNS (162 aa)) the chain is Lumenal. A GOLD domain is found at 30–126 (RKCFIEEVPD…QLRVHLDIQV (97 aa)). Residues 134-164 (ANVAQKEKLTELQLRIRQLLDQVEQITKEQN) adopt a coiled-coil conformation. A helical membrane pass occupies residues 183–203 (RVLWWSLAQTIVLVCMGFWQM). Topologically, residues 204 to 216 (RHLKSFFEAKKLV) are cytoplasmic. A Prevents secretion from ER motif is present at residues 213–216 (KKLV).

It belongs to the EMP24/GP25L family.

Its subcellular location is the endoplasmic reticulum membrane. In terms of biological role, eca and bai are essential, though not redundant, for dorsoventral patterning of the embryo. Specifically required during early embryogenesis for the activity of maternal tkv, while the zygotic tkv is not affected. Involved in Golgi organization. This chain is Transmembrane emp24 domain-containing protein eca, found in Drosophila sechellia (Fruit fly).